Consider the following 421-residue polypeptide: Homoserine dehydrogenase (421 aa).

3 residues coordinate NAD(+): Val-15, Ala-34, and Val-44. Residue Val-15 participates in NADP(+) binding. Val-15 is an NADPH binding site. Positions 46 and 103 each coordinate NADP(+). 2 residues coordinate NADPH: Arg-46 and Lys-103. Glu-125, Val-128, Gly-130, and Ile-132 together coordinate Na(+). The NADP(+) site is built by Gly-183 and Glu-186. Glu-186 and Asp-197 together coordinate L-homoserine. Lys-201 (proton donor) is an active-site residue. An NAD(+)-binding site is contributed by Gly-298. NADP(+) is bound at residue Gly-298. NADPH is bound at residue Gly-298. An ACT domain is found at 343-418; the sequence is YARLLVSDEK…SVLDTPKMIR (76 aa).

The protein belongs to the homoserine dehydrogenase family. Requires a metal cation as cofactor.

It carries out the reaction L-homoserine + NADP(+) = L-aspartate 4-semialdehyde + NADPH + H(+). It catalyses the reaction L-homoserine + NAD(+) = L-aspartate 4-semialdehyde + NADH + H(+). Its pathway is amino-acid biosynthesis; L-methionine biosynthesis via de novo pathway; L-homoserine from L-aspartate: step 3/3. It participates in amino-acid biosynthesis; L-threonine biosynthesis; L-threonine from L-aspartate: step 3/5. Catalyzes the conversion of L-aspartate-beta-semialdehyde (L-Asa) to L-homoserine (L-Hse), the third step in the biosynthesis of threonine and methionine from aspartate. This chain is Homoserine dehydrogenase (hom), found in Helicobacter pylori (strain ATCC 700392 / 26695) (Campylobacter pylori).